A 1714-amino-acid polypeptide reads, in one-letter code: Bifunctional glutamate/proline--tRNA ligase (1714 aa).

The tract at residues 166 to 191 (DAKVKRSPQSSKEQTPAKTGERKQEG) is disordered. Positions 170–754 (KRSPQSSKEQ…ASELDSQISQ (585 aa)) are glutamate--tRNA ligase. Residues 172–182 (SPQSSKEQTPA) show a composition bias toward polar residues. Positions 209 to 220 (PPEASGYLHIGH) match the 'HIGH' region motif. A 'KMSKS' region motif is present at residues 438 to 442 (VLSKR). 3 disordered regions span residues 718–754 (PTSGLKVNAPDAKATKKASSPVSSSGQASELDSQISQ), 791–817 (GKDWKPGQTSASSAPVPAASSSSANDA), and 943–962 (GTTAPAPAAAPVKVKQEKNP). 2 stretches are compositionally biased toward low complexity: residues 734 to 746 (KASSPVSSSGQAS) and 800 to 817 (SASSAPVPAASSSSANDA). 5 consecutive WHEP-TRS domains span residues 744 to 800 (QASE…GQTS), 816 to 872 (DAVS…GTVP), 890 to 946 (SVAQ…GTTA), 969 to 1025 (TVNT…GTVA), and 1044 to 1100 (DVGS…DAKS). The 6 X 57 AA approximate repeats stretch occupies residues 755 to 1201 (QGDLVRDLKS…KPAKPVKKEP (447 aa)). Disordered stretches follow at residues 1093–1119 (DWTPDAKSEPAVVKKEASPVSMASPAK) and 1168–1210 (FPVA…GAVK). Over residues 1094-1109 (WTPDAKSEPAVVKKEA) the composition is skewed to basic and acidic residues. Phosphoserine is present on Ser-1110. The 57-residue stretch at 1118–1174 (AKDELTQEINAQGEKVRAAKGNKAAKEVIDAEVAKLLALKAKYKEVTGTDFPVAGRG) folds into the WHEP-TRS 6 domain. Positions 1172 to 1181 (GRGGGGGGGS) are enriched in gly residues. Positions 1207–1714 (GAVKKQTRLG…KFYTLFGRSY (508 aa)) are proline--tRNA ligase. Residues 1322–1324 (TSE) and Arg-1353 contribute to the L-proline site. The ATP site is built by Arg-1353, Glu-1355, Arg-1364, Thr-1365, Gln-1438, and Thr-1441. Gln-1438 serves as a coordination point for Mg(2+). Position 1443 (His-1443) interacts with L-proline. ATP is bound by residues Thr-1476 and Arg-1478. Zn(2+)-binding residues include Cys-1648, Cys-1653, and Cys-1695.

In the N-terminal section; belongs to the class-I aminoacyl-tRNA synthetase family. Glutamate--tRNA ligase type 2 subfamily. It in the C-terminal section; belongs to the class-II aminoacyl-tRNA synthetase family. Component of the multisynthetase complex which is comprised of a bifunctional glutamyl-prolyl-tRNA synthetase, the monospecific isoleucyl, leucyl, glutaminyl, methionyl, lysyl, arginyl, and aspartyl-tRNA synthetases as well as three auxiliary proteins, p18, p48 and p43.

It catalyses the reaction tRNA(Glu) + L-glutamate + ATP = L-glutamyl-tRNA(Glu) + AMP + diphosphate. It carries out the reaction tRNA(Pro) + L-proline + ATP = L-prolyl-tRNA(Pro) + AMP + diphosphate. In terms of biological role, catalyzes the attachment of both L-glutamate and L-proline to their cognate tRNAs in a two-step reaction where the amino acid is first activated by ATP to form a covalent intermediate with AMP. Subsequently, the activated amino acid is transferred to the acceptor end of the cognate tRNA to form L-glutamyl-tRNA(Glu) and L-prolyl-tRNA(Pro). The chain is Bifunctional glutamate/proline--tRNA ligase from Drosophila melanogaster (Fruit fly).